A 180-amino-acid polypeptide reads, in one-letter code: Dual-action ribosomal maturation protein DarP (180 aa).

A compositionally biased stretch (basic and acidic residues) spans 1–13; the sequence is MKPDKTENTEHGI. Residues 1 to 21 are disordered; sequence MKPDKTENTEHGIEPVSKTKR.

It belongs to the DarP family.

Its subcellular location is the cytoplasm. Functionally, member of a network of 50S ribosomal subunit biogenesis factors which assembles along the 30S-50S interface, preventing incorrect 23S rRNA structures from forming. Promotes peptidyl transferase center (PTC) maturation. The polypeptide is Dual-action ribosomal maturation protein DarP (Methylobacillus flagellatus (strain ATCC 51484 / DSM 6875 / VKM B-1610 / KT)).